A 208-amino-acid polypeptide reads, in one-letter code: Large ribosomal subunit protein uL3 (208 aa).

This sequence belongs to the universal ribosomal protein uL3 family. Part of the 50S ribosomal subunit. Forms a cluster with proteins L14 and L19.

In terms of biological role, one of the primary rRNA binding proteins, it binds directly near the 3'-end of the 23S rRNA, where it nucleates assembly of the 50S subunit. This chain is Large ribosomal subunit protein uL3, found in Desulfosudis oleivorans (strain DSM 6200 / JCM 39069 / Hxd3) (Desulfococcus oleovorans).